The primary structure comprises 577 residues: Cell pattern formation-associated protein stuA (577 aa).

Residues 1-41 (MNQPQPYMDQHAPAPPPASNMTQYSNYGAPQPLQPATHGYG) form a disordered region. Residues 19–28 (SNMTQYSNYG) show a composition bias toward polar residues. In terms of domain architecture, HTH APSES-type spans 111–217 (RVTATLWEDE…HNIGALLYHP (107 aa)). Residues 145-166 (GTKLLNVAGMTRGRRDGILKSE) constitute a DNA-binding region (H-T-H motif). Disordered stretches follow at residues 228–487 (ATMA…QLPS) and 518–577 (QYPA…AVRR). 2 stretches are compositionally biased toward polar residues: residues 238–251 (SQEYMRTPQGTQAP) and 319–333 (AVNSASTPPSNSQGM). The span at 334–350 (PQYQTSQPPYTQSYSTP) shows a compositional bias: low complexity. Polar residues predominate over residues 351-364 (GSYSQPQYTHQQPG). The segment covering 390 to 399 (AENDHPDHKV) has biased composition (basic and acidic residues). The segment covering 465-479 (TPRTTNPYTGYNNTP) has biased composition (low complexity). The tract at residues 526–552 (KRGREDDDQVDPYGRPSSALGEHKRQR) is nuclear localization domain.

This sequence belongs to the EFG1/PHD1/stuA family.

It is found in the nucleus. In terms of biological role, transcription factor that regulates asexual reproduction. Binds the StuA-response elements (StRE) with the consensus sequence 5'-(A/T)CGCG(T/A)N(A/C)-3' at the promoters of target genes. In Dothistroma septosporum (strain NZE10 / CBS 128990) (Red band needle blight fungus), this protein is Cell pattern formation-associated protein stuA.